The primary structure comprises 408 residues: L,D-transpeptidase 2 (408 aa).

Positions Met-1–Ala-34 are cleaved as a signal peptide. Cys-35 is lipidated: N-palmitoyl cysteine. Residue Cys-35 is the site of S-diacylglycerol cysteine attachment. Residues Asp-232, Glu-235, and Gly-236 each contribute to the Ca(2+) site. The 126-residue stretch at Val-253–Val-378 folds into the L,D-TPase catalytic domain. Substrate contacts are provided by residues Tyr-318 and Ser-331 to Gly-332. His-336 serves as the catalytic Proton donor/acceptor. Cys-354 acts as the Nucleophile in catalysis. Substrate is bound at residue Asn-356.

As to quaternary structure, monomer.

Its subcellular location is the cell membrane. It participates in cell wall biogenesis; peptidoglycan biosynthesis. Its activity is regulated as follows. Is irreversibly inactivated by the beta-lactams carbapenems via the formation of a covalent adduct resulting from acylation of the catalytic Cys. In terms of biological role, generates 3-&gt;3 cross-links in peptidoglycan, catalyzing the cleavage of the mDap(3)-D-Ala(4) bond of a tetrapeptide donor stem and the formation of a bond between the carbonyl of mDap(3) of the donor stem and the side chain of mDap(3) of the acceptor stem. Is specific for donor substrates containing a stem tetrapeptide since it cannot use pentapeptide stems. Is essential for virulence in a mouse model of acute infection. This chain is L,D-transpeptidase 2 (ldtB), found in Mycobacterium tuberculosis (strain CDC 1551 / Oshkosh).